The chain runs to 765 residues: Endosialin (765 aa).

A signal peptide spans 1 to 17; sequence MLLRLLLAWVAAVPALG. Residues 18-695 are Extracellular-facing; it reads QVPWTPEPRA…GQSQRDDRWL (678 aa). The C-type lectin domain maps to 30–156; that stretch reads GPSSCYALFP…CTLAVDGYLC (127 aa). Intrachain disulfides connect Cys-131–Cys-147, Cys-164–Cys-213, Cys-203–Cys-230, Cys-316–Cys-326, Cys-322–Cys-335, and Cys-337–Cys-350. The Sushi domain maps to 162 to 232; it reads GACPALPLEV…WSQTGPLCPG (71 aa). Residues 312–351 form the EGF-like; calcium-binding domain; sequence DTDECQIAGVCQQMCVNYVGGFECYCSEGHELEADGISCS. Thr-401, Thr-428, Thr-448, Thr-456, Thr-459, and Thr-466 each carry an O-linked (GalNAc...) threonine glycan. 2 O-linked (GalNAc...) serine glycosylation sites follow: Ser-467 and Ser-470. Thr-472 carries an O-linked (GalNAc...) threonine glycan. Ser-477 is a glycosylation site (O-linked (GalNAc...) serine). Residues Thr-488, Thr-517, Thr-520, Thr-535, Thr-552, Thr-554, Thr-556, Thr-570, Thr-571, Thr-604, and Thr-613 are each glycosylated (O-linked (GalNAc...) threonine). The tract at residues 548–675 is disordered; the sequence is MSPDTHTITY…QLPSVPSTAA (128 aa). A compositionally biased stretch (pro residues) spans 622–633; it reads PAFPSSPLPPQR. O-linked (GalNAc...) serine glycosylation is found at Ser-626 and Ser-627. O-linked (GalNAc...) threonine glycosylation is found at Thr-635 and Thr-638. Positions 635-647 are enriched in polar residues; that stretch reads TNQTSSISPTHSY. Residues Ser-639 and Ser-640 are each glycosylated (O-linked (GalNAc...) serine). The O-linked (GalNAc...) threonine glycan is linked to Thr-644. Ser-663 is a glycosylation site (O-linked (GalNAc...) serine). O-linked (GalNAc...) threonine glycosylation occurs at Thr-673. A helical transmembrane segment spans residues 696 to 716; the sequence is LVALLVPTCVFLVVLLALGIV. Residues 717–765 lie on the Cytoplasmic side of the membrane; that stretch reads YCTRCGSHAPNKRITDCYRWVTHAGNKSSTEPMPPRGSLTGVQTCRTSV. Residue Ser-754 is modified to Phosphoserine.

In terms of assembly, interacts with PDGFRA; this interaction promotes PDGF receptor signaling pathway. Interacts with integrin beta-1/ITGB1. Interacts with insulin receptor/INSR; this interaction diminishes INSR autophosphorylation. Post-translationally, O-glycosylated by sialylated oligosaccharides. In terms of processing, may be N-glycosylated. Expressed in cell lines derived from endothelial cells, embryonic fibroblasts and preadipocytes. Expressed in skeletal muscle by a subset of pericytes.

It localises to the membrane. Functionally, cell surface glycoprotein involved in various biological processes including angiogenesis, immune response modulation, and tissue remodeling and repair. Participates in pericyte proliferation through positive modulation of the PDGF receptor signaling pathway. Acts as a scaffold for factor X, triggering allosteric changes and the spatial re-alignment of factor X with the TF-factor VIIa complex, thereby enhancing coagulation activation. Modulates the insulin signaling pathway by interacting with insulin receptor/INSR and by diminishing its capacity to be autophosphorylated in response to insulin. Also regulates LPS-induced inflammatory responses in macrophages by favoring production of proinflammatory cytokines. This chain is Endosialin (Cd248), found in Mus musculus (Mouse).